Consider the following 325-residue polypeptide: Malate dehydrogenase (325 aa).

Residue 11–17 (GAAGQIA) coordinates NAD(+). Residues Arg-92 and Arg-98 each contribute to the substrate site. Residues Asn-105, Gln-112, and 129-131 (VGN) contribute to the NAD(+) site. 2 residues coordinate substrate: Asn-131 and Arg-162. His-187 acts as the Proton acceptor in catalysis.

It belongs to the LDH/MDH superfamily. MDH type 2 family.

The enzyme catalyses (S)-malate + NAD(+) = oxaloacetate + NADH + H(+). Its function is as follows. Catalyzes the reversible oxidation of malate to oxaloacetate. In Methylococcus capsulatus (strain ATCC 33009 / NCIMB 11132 / Bath), this protein is Malate dehydrogenase.